The primary structure comprises 307 residues: Ubiquitin recognition factor in ER-associated degradation protein 1 (307 aa).

An N-acetylmethionine modification is found at Met-1. Residues Ser-129, Ser-231, Ser-245, Ser-247, and Ser-299 each carry the phosphoserine modification. Disordered stretches follow at residues 231 to 256 (SGNR…DIKR) and 288 to 307 (GRFV…GRKP).

This sequence belongs to the UFD1 family. As to quaternary structure, heterodimer with NPLOC4, this heterodimer binds VCP and inhibits Golgi membrane fusion. Interacts with USP13. Interacts with ZFAND2B; probably through VCP. Found in adult heart, skeletal muscle and pancreas, and in fetal liver and kidney.

Its subcellular location is the nucleus. The protein localises to the cytoplasm. It is found in the cytosol. Its pathway is protein degradation; proteasomal ubiquitin-dependent pathway. Its function is as follows. Essential component of the ubiquitin-dependent proteolytic pathway which degrades ubiquitin fusion proteins. The ternary complex containing UFD1, VCP and NPLOC4 binds ubiquitinated proteins and is necessary for the export of misfolded proteins from the ER to the cytoplasm, where they are degraded by the proteasome. The NPLOC4-UFD1-VCP complex regulates spindle disassembly at the end of mitosis and is necessary for the formation of a closed nuclear envelope. It may be involved in the development of some ectoderm-derived structures. Acts as a negative regulator of type I interferon production via the complex formed with VCP and NPLOC4, which binds to RIGI and recruits RNF125 to promote ubiquitination and degradation of RIGI. This is Ubiquitin recognition factor in ER-associated degradation protein 1 from Homo sapiens (Human).